Here is a 646-residue protein sequence, read N- to C-terminus: Beta-mannosyltransferase 6 (646 aa).

Residues 1 to 25 (MGNYKPSIKQYVVTVKAIKSSQFGR) lie on the Cytoplasmic side of the membrane. Residues 26 to 46 (LGICAVVLLFVLGYPFYFISN) form a helical membrane-spanning segment. Residues 47–646 (NPFDTSIRYQ…LTGGWLPSHN (600 aa)) are Extracellular-facing. Residues asparagine 62, asparagine 81, asparagine 103, asparagine 117, asparagine 127, asparagine 132, asparagine 146, asparagine 334, and asparagine 393 are each glycosylated (N-linked (GlcNAc...) asparagine).

The protein belongs to the BMT family.

It is found in the membrane. In terms of biological role, beta-mannosyltransferase involved in cell wall biosynthesis. Required for beta-1,2-mannose transfer on phospholipomannan. Required for pro-inflammatory response in macrophages through phospholipomannan-induced TNF-alpha production. The polypeptide is Beta-mannosyltransferase 6 (BMT6) (Candida albicans (strain SC5314 / ATCC MYA-2876) (Yeast)).